The following is a 523-amino-acid chain: Sugar carrier protein C (523 aa).

Over Met-1–Val-25 the chain is Cytoplasmic. 12 helical membrane-spanning segments follow: residues Thr-26–Ser-46, Met-86–Thr-106, Val-120–Leu-140, Ile-143–Met-163, Leu-172–Tyr-192, Leu-205–Pro-225, Leu-298–Asp-320, Val-327–Trp-347, Phe-351–Ile-371, Trp-387–Trp-407, Ser-433–Leu-453, and Gly-456–Leu-476. The Cytoplasmic segment spans residues Pro-477–Val-523.

This sequence belongs to the major facilitator superfamily. Sugar transporter (TC 2.A.1.1) family.

The protein localises to the membrane. The protein is Sugar carrier protein C (STC) of Ricinus communis (Castor bean).